We begin with the raw amino-acid sequence, 356 residues long: 5-formaminoimidazole-4-carboxamide-1-(beta)-D-ribofuranosyl 5'-monophosphate synthetase (356 aa).

His27 and Ser94 together coordinate 5-amino-1-(5-phospho-beta-D-ribosyl)imidazole-4-carboxamide. In terms of domain architecture, ATP-grasp spans 101 to 333 (TENFADMAVP…YADLMEENLS (233 aa)). Residues 145-196 (PHDI…TRYY) and Glu226 each bind ATP. 5-amino-1-(5-phospho-beta-D-ribosyl)imidazole-4-carboxamide is bound at residue Asn255. The Mg(2+) site is built by Glu293 and Glu306.

The protein belongs to the phosphohexose mutase family. Mg(2+) is required as a cofactor. Mn(2+) serves as cofactor.

The enzyme catalyses 5-amino-1-(5-phospho-beta-D-ribosyl)imidazole-4-carboxamide + formate + ATP = 5-formamido-1-(5-phospho-D-ribosyl)imidazole-4-carboxamide + ADP + phosphate. It participates in purine metabolism; IMP biosynthesis via de novo pathway; 5-formamido-1-(5-phospho-D-ribosyl)imidazole-4-carboxamide from 5-amino-1-(5-phospho-D-ribosyl)imidazole-4-carboxamide (formate route): step 1/1. Its function is as follows. Catalyzes the ATP- and formate-dependent formylation of 5-aminoimidazole-4-carboxamide-1-beta-d-ribofuranosyl 5'-monophosphate (AICAR) to 5-formaminoimidazole-4-carboxamide-1-beta-d-ribofuranosyl 5'-monophosphate (FAICAR) in the absence of folates. This is 5-formaminoimidazole-4-carboxamide-1-(beta)-D-ribofuranosyl 5'-monophosphate synthetase from Methanosarcina barkeri (strain Fusaro / DSM 804).